Consider the following 504-residue polypeptide: Probable cytosol aminopeptidase (504 aa).

Residues lysine 268 and aspartate 273 each coordinate Mn(2+). Lysine 280 is a catalytic residue. Residues aspartate 291, aspartate 350, and glutamate 352 each coordinate Mn(2+). Arginine 354 is a catalytic residue.

It belongs to the peptidase M17 family. Mn(2+) serves as cofactor.

The protein resides in the cytoplasm. The enzyme catalyses Release of an N-terminal amino acid, Xaa-|-Yaa-, in which Xaa is preferably Leu, but may be other amino acids including Pro although not Arg or Lys, and Yaa may be Pro. Amino acid amides and methyl esters are also readily hydrolyzed, but rates on arylamides are exceedingly low.. It catalyses the reaction Release of an N-terminal amino acid, preferentially leucine, but not glutamic or aspartic acids.. In terms of biological role, presumably involved in the processing and regular turnover of intracellular proteins. Catalyzes the removal of unsubstituted N-terminal amino acids from various peptides. The sequence is that of Probable cytosol aminopeptidase from Psychromonas ingrahamii (strain DSM 17664 / CCUG 51855 / 37).